Here is a 199-residue protein sequence, read N- to C-terminus: Recombination protein RecR (199 aa).

The C4-type zinc-finger motif lies at 57-72 (CSVCGNITEDDPCPIC). Residues 80 to 176 (SRVLVVERSR…KVTRLAHGLS (97 aa)) form the Toprim domain.

This sequence belongs to the RecR family.

May play a role in DNA repair. It seems to be involved in an RecBC-independent recombinational process of DNA repair. It may act with RecF and RecO. The chain is Recombination protein RecR from Limosilactobacillus fermentum (strain NBRC 3956 / LMG 18251) (Lactobacillus fermentum).